Reading from the N-terminus, the 484-residue chain is Serine/arginine-rich splicing factor 11 (484 aa).

Residues 1–33 (MSNTTVVPSTAGPGPSGGPGGGGGGGGGGGGTE) form a disordered region. The residue at position 2 (Ser-2) is an N-acetylserine. A compositionally biased stretch (gly residues) spans 14 to 32 (GPSGGPGGGGGGGGGGGGT). Residues 33–113 (EVIQVTNVSP…ALIVVPYAEG (81 aa)) enclose the RRM domain. Lys-197 participates in a covalent cross-link: Glycyl lysine isopeptide (Lys-Gly) (interchain with G-Cter in SUMO2). A Phosphoserine modification is found at Ser-207. Lys-211 is covalently cross-linked (Glycyl lysine isopeptide (Lys-Gly) (interchain with G-Cter in SUMO2)). Ser-212 carries the post-translational modification Phosphoserine. Residues 233–484 (ISAAIEPDKK…HHEEDMDMSD (252 aa)) are disordered. The span at 244 to 308 (EKRRHSRSRS…ERGRRSRSTS (65 aa)) shows a compositional bias: basic residues. 10 repeat units span residues 247 to 255 (RHSRSRSRS), 258 to 265 (RRTPSSSR), 267 to 274 (RRSRSRSR), 275 to 282 (RRSHSKSR), 285 to 292 (RRSKSPRR), 293 to 300 (RRSHSRER), 302 to 309 (RRSRSTSK), 321 to 328 (KRSKTPPK), 334 to 341 (RRSRSASR), and 346 to 353 (RRSRSGTR). The interval 247–353 (RHSRSRSRSR…RRRRSRSGTR (107 aa)) is 10 X 8 AA approximate repeats of R-R-S-R-S-R-S-R. Positions 309–320 (KTRDKKKEDKEK) are enriched in basic and acidic residues. Ser-323 is subject to Phosphoserine. Position 325 is a phosphothreonine (Thr-325). A compositionally biased stretch (basic residues) spans 334–379 (RRSRSASRERRRRRSRSGTRSPKKPRSPKRKLSRSPSPRRHKKEKK). 3 stretches are compositionally biased toward basic and acidic residues: residues 380–395 (KDKDKERSRDERERST), 402–424 (KDKEKDRERKSESDKDVKQVTRD), and 433–478 (DSEK…HHEE). Phosphoserine is present on residues Ser-414 and Ser-434. Phosphothreonine is present on Thr-447. Phosphoserine is present on residues Ser-449, Ser-456, Ser-464, and Ser-483.

This sequence belongs to the splicing factor SR family. Interacts with PUF60.

Its subcellular location is the nucleus. In terms of biological role, may function in pre-mRNA splicing. The polypeptide is Serine/arginine-rich splicing factor 11 (SRSF11) (Homo sapiens (Human)).